The sequence spans 282 residues: UDP-3-O-acyl-N-acetylglucosamine deacetylase (282 aa).

3 residues coordinate Zn(2+): His81, His239, and Asp243. Residue His266 is the Proton donor of the active site.

This sequence belongs to the LpxC family. Zn(2+) serves as cofactor.

It catalyses the reaction a UDP-3-O-[(3R)-3-hydroxyacyl]-N-acetyl-alpha-D-glucosamine + H2O = a UDP-3-O-[(3R)-3-hydroxyacyl]-alpha-D-glucosamine + acetate. It participates in glycolipid biosynthesis; lipid IV(A) biosynthesis; lipid IV(A) from (3R)-3-hydroxytetradecanoyl-[acyl-carrier-protein] and UDP-N-acetyl-alpha-D-glucosamine: step 2/6. Its function is as follows. Catalyzes the hydrolysis of UDP-3-O-myristoyl-N-acetylglucosamine to form UDP-3-O-myristoylglucosamine and acetate, the committed step in lipid A biosynthesis. This chain is UDP-3-O-acyl-N-acetylglucosamine deacetylase, found in Chlamydia pneumoniae (Chlamydophila pneumoniae).